Consider the following 201-residue polypeptide: Dephospho-CoA kinase (201 aa).

The 198-residue stretch at 4–201 folds into the DPCK domain; that stretch reads IIGITGGIAS…LEGGRQDDRD (198 aa). 12–17 lines the ATP pocket; it reads ASGKST.

It belongs to the CoaE family.

Its subcellular location is the cytoplasm. The catalysed reaction is 3'-dephospho-CoA + ATP = ADP + CoA + H(+). It functions in the pathway cofactor biosynthesis; coenzyme A biosynthesis; CoA from (R)-pantothenate: step 5/5. Catalyzes the phosphorylation of the 3'-hydroxyl group of dephosphocoenzyme A to form coenzyme A. The sequence is that of Dephospho-CoA kinase from Streptococcus pneumoniae (strain ATCC BAA-255 / R6).